We begin with the raw amino-acid sequence, 457 residues long: tRNA(Ile)-lysidine synthase (457 aa).

Residue S27 to S32 participates in ATP binding.

It belongs to the tRNA(Ile)-lysidine synthase family.

The protein localises to the cytoplasm. The enzyme catalyses cytidine(34) in tRNA(Ile2) + L-lysine + ATP = lysidine(34) in tRNA(Ile2) + AMP + diphosphate + H(+). Ligates lysine onto the cytidine present at position 34 of the AUA codon-specific tRNA(Ile) that contains the anticodon CAU, in an ATP-dependent manner. Cytidine is converted to lysidine, thus changing the amino acid specificity of the tRNA from methionine to isoleucine. This Hamiltonella defensa subsp. Acyrthosiphon pisum (strain 5AT) protein is tRNA(Ile)-lysidine synthase.